Here is a 1372-residue protein sequence, read N- to C-terminus: DNA-directed RNA polymerase subunit beta (1372 aa).

The protein belongs to the RNA polymerase beta chain family. The RNAP catalytic core consists of 2 alpha, 1 beta, 1 beta' and 1 omega subunit. When a sigma factor is associated with the core the holoenzyme is formed, which can initiate transcription.

It catalyses the reaction RNA(n) + a ribonucleoside 5'-triphosphate = RNA(n+1) + diphosphate. DNA-dependent RNA polymerase catalyzes the transcription of DNA into RNA using the four ribonucleoside triphosphates as substrates. The polypeptide is DNA-directed RNA polymerase subunit beta (Bradyrhizobium sp. (strain BTAi1 / ATCC BAA-1182)).